A 730-amino-acid chain; its full sequence is Elongation factor 2 (730 aa).

The region spanning 19 to 228 (TKIRNIGIVA…TGVSFKDVYD (210 aa)) is the tr-type G domain. Residues 28–35 (AHIDHGKT), 94–98 (DTPGH), and 148–151 (NKVD) each bind GTP. Diphthamide is present on His596.

This sequence belongs to the TRAFAC class translation factor GTPase superfamily. Classic translation factor GTPase family. EF-G/EF-2 subfamily.

It is found in the cytoplasm. Functionally, catalyzes the GTP-dependent ribosomal translocation step during translation elongation. During this step, the ribosome changes from the pre-translocational (PRE) to the post-translocational (POST) state as the newly formed A-site-bound peptidyl-tRNA and P-site-bound deacylated tRNA move to the P and E sites, respectively. Catalyzes the coordinated movement of the two tRNA molecules, the mRNA and conformational changes in the ribosome. This chain is Elongation factor 2, found in Methanosarcina barkeri (strain Fusaro / DSM 804).